We begin with the raw amino-acid sequence, 344 residues long: Probable Delta(7)-sterol 5(6)-desaturase (344 aa).

A run of 3 helical transmembrane segments spans residues 76 to 96, 123 to 143, and 160 to 180; these read LSLFLILWLFGLVTYYVFASL, QTNAALPVMAFFTFPFLVAEV, and WYDFFQFPLFIMFTDFGIYWI. Residues 167 to 292 enclose the Fatty acid hydroxylase domain; sequence PLFIMFTDFG…FTTLWDRLGG (126 aa). The Histidine box-1 signature appears at 181-185; sequence HRGLH. The Histidine box-2 signature appears at 194–198; it reads HKPHH. Residues 224-244 traverse the membrane as a helical segment; sequence HIFPFIFPLQKMAYVGLFVFI. The Histidine box-3 signature appears at 269-273; it reads HSVHH.

The protein belongs to the sterol desaturase family. It depends on Fe cation as a cofactor.

The protein localises to the endoplasmic reticulum membrane. It catalyses the reaction a Delta(7)-sterol + 2 Fe(II)-[cytochrome b5] + O2 + 2 H(+) = a Delta(5),Delta(7)-sterol + 2 Fe(III)-[cytochrome b5] + 2 H2O. It participates in steroid metabolism; ergosterol biosynthesis; ergosterol from zymosterol: step 3/5. Its function is as follows. Catalyzes the introduction of a C-5 double bond in the B ring of ergosterol. May contribute to the regulation of ergosterol biosynthesis. The chain is Probable Delta(7)-sterol 5(6)-desaturase from Neurospora crassa (strain ATCC 24698 / 74-OR23-1A / CBS 708.71 / DSM 1257 / FGSC 987).